The primary structure comprises 172 residues: Translation initiation factor IF-3 (172 aa).

The protein belongs to the IF-3 family. In terms of assembly, monomer.

It is found in the cytoplasm. Functionally, IF-3 binds to the 30S ribosomal subunit and shifts the equilibrium between 70S ribosomes and their 50S and 30S subunits in favor of the free subunits, thus enhancing the availability of 30S subunits on which protein synthesis initiation begins. This Campylobacter curvus (strain 525.92) protein is Translation initiation factor IF-3.